Reading from the N-terminus, the 209-residue chain is High frequency lysogenization protein HflD homolog (209 aa).

Positions 95 to 132 form a coiled coil; it reads LERKLAASKGAMNTLGNRIADLSRQLEHFELESDTLMS.

Belongs to the HflD family.

It localises to the cytoplasm. It is found in the cell inner membrane. In Cronobacter sakazakii (strain ATCC BAA-894) (Enterobacter sakazakii), this protein is High frequency lysogenization protein HflD homolog.